We begin with the raw amino-acid sequence, 858 residues long: Large structural phosphoprotein (858 aa).

The interval 603–629 (DVSRGGKGNSRDLYSGGNAEKKETSGK) is disordered.

It belongs to the herpesviridae large structural phosphoprotein family. In terms of assembly, homotetramer. Interacts with the major capsid protein. 180 tegument protein pU11 tetramers bind to the virion capsid. In terms of processing, phosphorylated at multiple sites.

It is found in the virion tegument. The polypeptide is Large structural phosphoprotein (U11) (Homo sapiens (Human)).